The chain runs to 445 residues: GTPase Der (445 aa).

2 EngA-type G domains span residues 3–166 and 180–353; these read PVIA…AERV and IRIG…ESCY. Residues 9-16, 56-60, 118-121, 186-193, 233-237, and 298-301 contribute to the GTP site; these read GRPNVGKS, DTGGI, NKTD, DTAGI, and NKWD. Residues 354-438 enclose the KH-like domain; that stretch reads AKWTTNRLTR…PIIFEFKSAE (85 aa).

It belongs to the TRAFAC class TrmE-Era-EngA-EngB-Septin-like GTPase superfamily. EngA (Der) GTPase family. In terms of assembly, associates with the 50S ribosomal subunit.

In terms of biological role, GTPase that plays an essential role in the late steps of ribosome biogenesis. The chain is GTPase Der from Marinomonas sp. (strain MWYL1).